We begin with the raw amino-acid sequence, 275 residues long: Caspase-3 (275 aa).

Position 1 is an N-acetylmethionine (Met-1). 2 consecutive propeptides follow at residues 1-9 (MENTENSVD) and 10-28 (SKSI…KSMD). Lys-11 bears the N6-acetyllysine mark. Ser-26 bears the Phosphoserine mark. Catalysis depends on residues His-121 and Cys-163. Residue Cys-163 is modified to S-nitrosocysteine; in inhibited form.

This sequence belongs to the peptidase C14A family. In terms of assembly, heterotetramer that consists of two anti-parallel arranged heterodimers, each one formed by a 17 kDa (p17) and a 12 kDa (p12) subunit. Interacts with BIRC6/bruce. Cleavage by granzyme B, caspase-6, caspase-8 and caspase-10 generates the two active subunits. Additional processing of the propeptides is likely due to the autocatalytic activity of the activated protease. Active heterodimers between the small subunit of caspase-7 protease and the large subunit of caspase-3 also occur and vice versa. Post-translationally, S-nitrosylated on its catalytic site cysteine in unstimulated cell lines and denitrosylated upon activation of the Fas apoptotic pathway, associated with an increase in intracellular caspase activity. Fas therefore activates caspase-3 not only by inducing the cleavage of the caspase zymogen to its active subunits, but also by stimulating the denitrosylation of its active site thiol. In terms of processing, ubiquitinated by BIRC6; this activity is inhibited by DIABLO/SMAC.

It localises to the cytoplasm. The enzyme catalyses Strict requirement for an Asp residue at positions P1 and P4. It has a preferred cleavage sequence of Asp-Xaa-Xaa-Asp-|- with a hydrophobic amino-acid residue at P2 and a hydrophilic amino-acid residue at P3, although Val or Ala are also accepted at this position.. Its activity is regulated as follows. Inhibited by BIRC6; following inhibition of BIRC6-caspase binding by DIABLO/SMAC, BIRC6 is subjected to caspase cleavage, leading to an increase in active caspases. Functionally, involved in the activation cascade of caspases responsible for apoptosis execution. At the onset of apoptosis, it proteolytically cleaves poly(ADP-ribose) polymerase PARP1 at a '216-Asp-|-Gly-217' bond. Cleaves and activates sterol regulatory element binding proteins (SREBPs) between the basic helix-loop-helix leucine zipper domain and the membrane attachment domain. Cleaves and activates caspase-6, -7 and -9 (CASP6, CASP7 and CASP9, respectively). Cleaves and inactivates interleukin-18 (IL18). Triggers cell adhesion in sympathetic neurons through RET cleavage. Cleaves IL-1 beta between an Asp and an Ala, releasing the mature cytokine which is involved in a variety of inflammatory processes. Cleaves and inhibits serine/threonine-protein kinase AKT1 in response to oxidative stress. Acts as an inhibitor of type I interferon production during virus-induced apoptosis by mediating cleavage of antiviral proteins CGAS, IRF3 and MAVS, thereby preventing cytokine overproduction. Also involved in pyroptosis by mediating cleavage and activation of gasdermin-E (GSDME). Cleaves XRCC4 and phospholipid scramblase proteins XKR4, XKR8 and XKR9, leading to promote phosphatidylserine exposure on apoptotic cell surface. Cleaves BIRC6 following inhibition of BIRC6-caspase binding by DIABLO/SMAC. The sequence is that of Caspase-3 (CASP3) from Bos taurus (Bovine).